A 325-amino-acid chain; its full sequence is Natural cytotoxicity triggering receptor 1 (325 aa).

The signal sequence occupies residues 1-16 (MLPTLTALLCLGLCLS). At 17 to 255 (QRINTEKETL…SAFWDHTTQN (239 aa)) the chain is on the extracellular side. Ig-like domains are found at residues 34–118 (KPSI…LVVT) and 129–211 (YPRP…LLIT). Cys-49 and Cys-98 are joined by a disulfide. The N-linked (GlcNAc...) asparagine glycan is linked to Asn-139. Cysteines 144 and 190 form a disulfide. Residues Asn-216 and Asn-238 are each glycosylated (N-linked (GlcNAc...) asparagine). A helical transmembrane segment spans residues 256–273 (LIRIGLACIILITLVWLL). The Cytoplasmic portion of the chain corresponds to 274-325 (TEDWLSKRKDHEEANRLTNWECRRRWRMQHYFEEEQRNAISMMELKATPGAL).

Belongs to the natural cytotoxicity receptor (NCR) family. Interacts with CD3Z and FCER1G. Selectively expressed by NK cells.

Its subcellular location is the cell membrane. Functionally, cytotoxicity-activating receptor that may contribute to the increased efficiency of activated natural killer (NK) cells to mediate tumor cell lysis. This Mus musculus (Mouse) protein is Natural cytotoxicity triggering receptor 1 (Ncr1).